The following is a 513-amino-acid chain: MTRVINLDGESLTLEDVIAIARQGVACRIDDSAIEAVNASRKIVDDIVSEKRVVYGVTTGFGSLCNVSISPEDTVQLQENLIRTHASGFGDPLPEDAVRAIMLIRINSLVKGYSGIRLSTIEKLLELLNKGVHPYIPEKGSLGASGDLAPLAHMVLPMLGLGKAYYKGEFLSGQEALDKAGIDKISLAAKEGLALINGTTVLTAIGALATYDAIQLLKLSDLAGALSLEVHNGITSPFEENLHTIRPQSGQLATARNIRNLLEGSQNTTVATQSRVQDPYTLRCMPQIHGASKDSIAYVKSKVDIEINSVTDNPIICKDGHVISGGNFHGEPMAQPFDFLGIAISEIGNVSERRVERLVNSQLSKLPSFLVKYPGLNSGFMITQYACASLASENKVLAHPASVDSIPSCENQEDFVSMGTTAARKAFEILKNSRRIVATEIMAACQALDLKPENHELGKGTKVAYDLFRKEVNFIEHDKHIEIYDELNKASTVIEDPSFLEAVEQAVELSIQF.

A cross-link (5-imidazolinone (Ala-Gly)) is located at residues alanine 144–glycine 146. Serine 145 carries the 2,3-didehydroalanine (Ser) modification.

Belongs to the PAL/histidase family. In terms of processing, contains an active site 4-methylidene-imidazol-5-one (MIO), which is formed autocatalytically by cyclization and dehydration of residues Ala-Ser-Gly.

The protein localises to the cytoplasm. The enzyme catalyses L-histidine = trans-urocanate + NH4(+). Its pathway is amino-acid degradation; L-histidine degradation into L-glutamate; N-formimidoyl-L-glutamate from L-histidine: step 1/3. In Streptococcus pyogenes serotype M5 (strain Manfredo), this protein is Histidine ammonia-lyase.